A 149-amino-acid chain; its full sequence is 3-dehydroquinate dehydratase (149 aa).

The active-site Proton acceptor is the Tyr-26. Substrate-binding residues include Asn-77, His-83, and Asp-90. His-103 functions as the Proton donor in the catalytic mechanism. Residues 104–105 and Arg-114 contribute to the substrate site; that span reads LS.

The protein belongs to the type-II 3-dehydroquinase family. Homododecamer.

The catalysed reaction is 3-dehydroquinate = 3-dehydroshikimate + H2O. Its pathway is metabolic intermediate biosynthesis; chorismate biosynthesis; chorismate from D-erythrose 4-phosphate and phosphoenolpyruvate: step 3/7. In terms of biological role, catalyzes a trans-dehydration via an enolate intermediate. The polypeptide is 3-dehydroquinate dehydratase (Aeromonas hydrophila subsp. hydrophila (strain ATCC 7966 / DSM 30187 / BCRC 13018 / CCUG 14551 / JCM 1027 / KCTC 2358 / NCIMB 9240 / NCTC 8049)).